The following is a 251-amino-acid chain: MSGHNKWASIKHKKTATDVKKGKVFTKIIREIVVATKESGAQIENNARLRKAIEDAKEANMPQDNIKKAIQRGTGEIPGAIYEEMVYEGYGPAGVALIVEVTTDNKNRTASDIRKMFSSHNGNLGEAGCVGWMFERKGYITVKKSAADEEIVMNTVLEAAVEDFKSEADSDVYEIITLSSDLETVKNVLKEKNITVESAEVTMVPQTQIALKSDNAKNMLKLMDALEDHDDVKNVYANFDISSEDMEKLNA.

This sequence belongs to the TACO1 family.

The protein resides in the cytoplasm. The protein is Probable transcriptional regulatory protein TGRD_462 of Endomicrobium trichonymphae.